Here is a 171-residue protein sequence, read N- to C-terminus: Histone H1, gonadal (171 aa).

Disordered regions lie at residues 1–40 (AASPQKRAASPRKSPKKSPRKSPKKKSPRKRKARSAAHPP) and 133–171 (AKAKKAKAAARRKAAAAKRKAAAAKRRAAKKARKAKAKP). The span at 9–35 (ASPRKSPKKSPRKSPKKKSPRKRKARS) shows a compositional bias: basic residues. The 75-residue stretch at 37–111 (AHPPVIDMIT…GATGRFRVGA (75 aa)) folds into the H15 domain.

The protein belongs to the histone H1/H5 family. Sperm.

The protein localises to the nucleus. Its subcellular location is the chromosome. Its function is as follows. Histones H1 are necessary for the condensation of nucleosome chains into higher-order structures. In Echinolampas crassa (Sea urchin), this protein is Histone H1, gonadal.